We begin with the raw amino-acid sequence, 269 residues long: Formamidopyrimidine-DNA glycosylase (269 aa).

Pro-2 acts as the Schiff-base intermediate with DNA in catalysis. Glu-3 functions as the Proton donor in the catalytic mechanism. Lys-57 (proton donor; for beta-elimination activity) is an active-site residue. DNA contacts are provided by His-90, Arg-109, and Lys-150. The segment at 235–269 (QVYGRKGEPCRVCGTPIVATKHAQRATFYCRHCQK) adopts an FPG-type zinc-finger fold. The active-site Proton donor; for delta-elimination activity is the Arg-259.

Belongs to the FPG family. Monomer. The cofactor is Zn(2+).

The catalysed reaction is Hydrolysis of DNA containing ring-opened 7-methylguanine residues, releasing 2,6-diamino-4-hydroxy-5-(N-methyl)formamidopyrimidine.. The enzyme catalyses 2'-deoxyribonucleotide-(2'-deoxyribose 5'-phosphate)-2'-deoxyribonucleotide-DNA = a 3'-end 2'-deoxyribonucleotide-(2,3-dehydro-2,3-deoxyribose 5'-phosphate)-DNA + a 5'-end 5'-phospho-2'-deoxyribonucleoside-DNA + H(+). Involved in base excision repair of DNA damaged by oxidation or by mutagenic agents. Acts as a DNA glycosylase that recognizes and removes damaged bases. Has a preference for oxidized purines, such as 7,8-dihydro-8-oxoguanine (8-oxoG). Has AP (apurinic/apyrimidinic) lyase activity and introduces nicks in the DNA strand. Cleaves the DNA backbone by beta-delta elimination to generate a single-strand break at the site of the removed base with both 3'- and 5'-phosphates. This chain is Formamidopyrimidine-DNA glycosylase, found in Salmonella dublin (strain CT_02021853).